The primary structure comprises 466 residues: MSESDPVPGGRPGEVERATALSGELTGQGVHGVVLAYVDTAGIARVKTVPTAKLAAAAAWGVGMSPVFDTFLADDSIVGTDVLGSPDGDLRLYPDLDRLTMLAAQPGWAWAPVDRITQEGAPHPACGRTVLRRIVAGAAERHGITFRAAVEVEWVVGRGDAGGDAFVPAVSGPAYGAARQVELSDCAADLLAALAAQGVDVEQFHPEYAAGQFEVSVGALGPVAAADHSVLVRQTIRAVSARHGLRVSFAPAVLGQGVGNGGHLHLSAWRDGTNLHAGGTARCGMTAEAESFVAGVLGHLPALTALTAPSPASRLRLRPSQWAGVFTAWGRETREAALRIVTGTAGIRDRAANLEVKPVDLAANPYLALASVIAAGLDGLASSAPLPEEITGDPARLDPAAAAARGVRRLPVTLTESVAAFRTDGVLREALGPVLADAVIAVRLGEAGSVEGLDDDGVAAAYRWKY.

In terms of domain architecture, GS catalytic spans 127–466; the sequence is GRTVLRRIVA…GVAAAYRWKY (340 aa). Residues glutamate 151 and glutamate 153 each contribute to the Mg(2+) site. Position 202 (glutamate 202) interacts with ATP. Glutamate 207 and glutamate 214 together coordinate Mg(2+). Residue glycine 259 coordinates L-glutamate. Histidine 263 contacts Mg(2+). An ATP-binding site is contributed by serine 267. Residues arginine 316 and arginine 334 each contribute to the L-glutamate site. Residues arginine 334 and arginine 339 each contribute to the ATP site. Glutamate 355 is a binding site for Mg(2+).

It belongs to the glutamine synthetase family. The cofactor is Mg(2+). In terms of tissue distribution, expressed in mycelium.

It catalyses the reaction spermine + L-glutamate + ATP = gamma-L-glutamylspermine + ADP + phosphate + H(+). It carries out the reaction spermidine + L-glutamate + ATP = gamma-L-glutamylspermidine + ADP + phosphate + H(+). The catalysed reaction is putrescine + L-glutamate + ATP = gamma-L-glutamylputrescine + ADP + phosphate + H(+). The enzyme catalyses cadaverine + L-glutamate + ATP = gamma-L-glutamylcadaverine + ADP + phosphate + H(+). Its pathway is amine and polyamine degradation; putrescine degradation. It participates in amine and polyamine degradation; spermidine degradation. The protein operates within amine and polyamine degradation; spermine degradation. Involved in the catabolism of polyamines. Catalyzes the ATP-dependent gamma-glutamylation of polyamines. Substrates include putrescine, cadaverine, spermidine and spermine, with a preference for long-chain polyamines spermidine and spermine. Is not able to compensate for the loss of glutamine synthetases (GSs). No complementation of the L-glutamine auxotrophy of an E.coli glnA mutant. Involved in morphological differentiation and in the production of secondary metabolites. Together with GlnA2, enables survival of S.coelicolor under exposure to high local environmental polyamine concentrations, which is toxic to the cells. This is Gamma-glutamylpolyamine synthetase GlnA3 from Streptomyces coelicolor (strain ATCC BAA-471 / A3(2) / M145).